Consider the following 410-residue polypeptide: Metacaspase-1 (410 aa).

A disordered region spans residues 1-94; that stretch reads MFPGSGRQTY…RQSGAMNDVS (94 aa). Low complexity-rich tracts occupy residues 21-47 and 55-64; these read APQYNYGPPQGPPQGYYNGPPQGYNGP and NYNYGHYGPP. Gly residues predominate over residues 65-75; that stretch reads QGQGQGYGQGG. The span at 80–94 shows a compositional bias: polar residues; that stretch reads MYNNNRQSGAMNDVS. Active-site residues include His-200 and Cys-256.

The protein belongs to the peptidase C14B family.

In terms of biological role, involved in cell death (apoptosis). The polypeptide is Metacaspase-1 (MCA1) (Meyerozyma guilliermondii (strain ATCC 6260 / CBS 566 / DSM 6381 / JCM 1539 / NBRC 10279 / NRRL Y-324) (Yeast)).